Here is a 63-residue protein sequence, read N- to C-terminus: Short neurotoxin 2 (63 aa).

4 cysteine pairs are disulfide-bonded: cysteine 3–cysteine 21, cysteine 15–cysteine 39, cysteine 43–cysteine 49, and cysteine 50–cysteine 55.

It belongs to the three-finger toxin family. Short-chain subfamily. Orphan group XVIII sub-subfamily. As to expression, expressed by the venom gland.

The protein resides in the secreted. Its function is as follows. Blocks both the muscle-twitch response to nerve stimulation and the response to exogenous acetylcholine. The sequence is that of Short neurotoxin 2 from Bungarus fasciatus (Banded krait).